Consider the following 156-residue polypeptide: Small ribosomal subunit protein bS16 (156 aa).

Residues 124-135 (AAKAAEAETPAE) are compositionally biased toward low complexity. Residues 124–156 (AAKAAEAETPAEVQHDDEKVELADVEESAPESV) are disordered. Basic and acidic residues predominate over residues 136 to 145 (VQHDDEKVEL). A compositionally biased stretch (acidic residues) spans 146-156 (ADVEESAPESV).

Belongs to the bacterial ribosomal protein bS16 family.

This is Small ribosomal subunit protein bS16 from Bifidobacterium animalis subsp. lactis (strain AD011).